The chain runs to 365 residues: Histidinol-phosphate aminotransferase (365 aa).

Lysine 223 is subject to N6-(pyridoxal phosphate)lysine.

This sequence belongs to the class-II pyridoxal-phosphate-dependent aminotransferase family. Histidinol-phosphate aminotransferase subfamily. As to quaternary structure, homodimer. It depends on pyridoxal 5'-phosphate as a cofactor.

The enzyme catalyses L-histidinol phosphate + 2-oxoglutarate = 3-(imidazol-4-yl)-2-oxopropyl phosphate + L-glutamate. It functions in the pathway amino-acid biosynthesis; L-histidine biosynthesis; L-histidine from 5-phospho-alpha-D-ribose 1-diphosphate: step 7/9. In Bacillus pumilus (strain SAFR-032), this protein is Histidinol-phosphate aminotransferase.